Consider the following 228-residue polypeptide: Rab-like protein 2A (228 aa).

GTP contacts are provided by residues 28 to 35 (GDSAVGKS), 76 to 80 (DTAGQ), and 133 to 136 (NKID). Positions 200-228 (LEQEEEDVPDQEQSSSIETPSEEVASPHS) are disordered.

This sequence belongs to the small GTPase superfamily. Rab family. As to quaternary structure, interacts with IFT27, IFT81, IFT172, ATP6V1E1, HK1, LDHC, MAPRE1 and HSPA2. Expressed in the testis.

Its function is as follows. Plays an essential role in male fertility, sperm intra-flagellar transport, and tail assembly. Binds, in a GTP-regulated manner, to a specific set of effector proteins including key proteins involved in cilia development and function and delivers them into the growing sperm tail. This Homo sapiens (Human) protein is Rab-like protein 2A (RABL2A).